The sequence spans 296 residues: Protoheme IX farnesyltransferase (296 aa).

The Cytoplasmic segment spans residues 1-9 (MMFKQYLQV). A helical transmembrane segment spans residues 10–28 (TKPGIIFGNLISVIGGFLL). At 29 to 37 (ASKGSIDYP) the chain is on the periplasmic side. A helical transmembrane segment spans residues 38-56 (LFIYTLVGVSLVVASGCVF). The Cytoplasmic portion of the chain corresponds to 57 to 78 (NNYIDRDIDRKMERTKNRVLVK). The chain crosses the membrane as a helical span at residues 79–97 (GLISPGVSLVYATLLGIAG). Residues 98–107 (FMLLWFGANP) are Periplasmic-facing. Residues 108–126 (LACWLGVMGFVVYVGVYSL) traverse the membrane as a helical segment. The Cytoplasmic portion of the chain corresponds to 127–197 (YMKRHSVYGT…YQAANIPVLP (71 aa)). Residues 198 to 216 (VIKGISVAKNHITLYIIAF) form a helical membrane-spanning segment. Over 217 to 228 (AVATLMLTLGGY) the chain is Periplasmic. A helical membrane pass occupies residues 229–247 (AGYKYLVVAAAVSVWWLGM). At 248–268 (ALRGYKVEDDKVWARKLFGFS) the chain is on the cytoplasmic side. Residues 269-287 (IIAITALSIMMSVDFMVPN) form a helical membrane-spanning segment. The Periplasmic portion of the chain corresponds to 288–296 (SQNLLTYVW).

The protein belongs to the UbiA prenyltransferase family. Protoheme IX farnesyltransferase subfamily.

Its subcellular location is the cell inner membrane. It carries out the reaction heme b + (2E,6E)-farnesyl diphosphate + H2O = Fe(II)-heme o + diphosphate. The protein operates within porphyrin-containing compound metabolism; heme O biosynthesis; heme O from protoheme: step 1/1. Functionally, converts heme B (protoheme IX) to heme O by substitution of the vinyl group on carbon 2 of heme B porphyrin ring with a hydroxyethyl farnesyl side group. The sequence is that of Protoheme IX farnesyltransferase from Salmonella typhi.